The following is a 315-amino-acid chain: MSKPLRIIFAGTPDFAARHLSALIDSHHEVIGVYTQPDRPAGRGKKLTASPVKELALEHNIPVFQPENFKSDEAKQELADQNADLMVVVAYGLLLPQAVLDTPKLGCINVHGSILPRWRGAAPIQRSIWAGDAETGVTIMQMDIGLDTGDMLKIATLPIEATDTSASMYDKLAELGPVALVDCLSDIADGSAIAQKQDDELANYAKKLSKEEAKIDWTMDAIAIERCVRAFNPWPMSHFSVEDKAIKVWQSRVESYTGDATPGTIIQADKTGIYVATGSDAIVFEQLQVPGKKAMGVQDILNSRKEWFEVGNTLN.

113 to 116 (SILP) provides a ligand contact to (6S)-5,6,7,8-tetrahydrofolate.

This sequence belongs to the Fmt family.

It carries out the reaction L-methionyl-tRNA(fMet) + (6R)-10-formyltetrahydrofolate = N-formyl-L-methionyl-tRNA(fMet) + (6S)-5,6,7,8-tetrahydrofolate + H(+). Its function is as follows. Attaches a formyl group to the free amino group of methionyl-tRNA(fMet). The formyl group appears to play a dual role in the initiator identity of N-formylmethionyl-tRNA by promoting its recognition by IF2 and preventing the misappropriation of this tRNA by the elongation apparatus. This chain is Methionyl-tRNA formyltransferase, found in Aliivibrio fischeri (strain MJ11) (Vibrio fischeri).